The primary structure comprises 852 residues: MLNKSAALVPVVLAFLFLFLCFQCLYADIRCLTGKDGAVHLEMEAKPLTIEPRPGVFFDAWGYCLKGDVPTVPGPVIKVREGTKVKILFRNKLTVPASIHPHGVKYTTANVGVNIAGNPASIVAPGDSRIFEWDTAGTPGTWFYHSYVFERGGEEGLSRGLWGALIVEPVGGDPNPPDKEFVVFMHAFNVNGQEYYAFNNKSGDIELMRGDSSAFPGETWKAKMGDKVRFHLINITEEAHTFHTHGHRWLDKSCDKLIDTIGLNPFDSYVLDFVAGEGVGKGNWAFHCQSQEHMMNGMFGIFMVEEGKRVNAVIASCDEGRKTLSAPGQDRQPPTLEGFSGAYMYPEITEKNMYESFAGLEKGDGIWGDYYSPIPLYTYFNPSRHYVPPESDAYTNLLVKYRPDQCVECHEETTPGIVAEWKMSNHANPKKNPHVSAETQEIEALIGKELNNWRPGTKDGVYCSYCHGSDHEKLFMPTVDNSCGACHPKQAAEFIKGRDHGRPNHPQSWEGNVSTPWYAEYYRRGEGYSMVGCDQCHQNMSSCDDCHSRHRFSAAEARRPEACSICHMGPDHPDWESYSRSKWGVIYETTKERWNWDKNLAEVIPGEDYLAPTCQYCHMYVGNNKWEMNVETKGIWRMGVIPPKEVEFKSGLKDFPYGIKIPPMDKKLEIYSAESQEKRRKWVELCSKCHSSRFAGMWLDSLDQYMFESWRRIDEAQLIIEKLFSENAIEPPPEKRPPFPLSDLIIKVLGAEKLGAEMYRLFKQTNGHLPVIGPILGAYSIFTQNEGNPGGIEREYAEMWFWSHLQGYKGAAHAQPDISWWWGTAQGVGNLTRIRDEAEKLRRLKSGSSSGF.

Positions 1-27 (MLNKSAALVPVVLAFLFLFLCFQCLYA) are cleaved as a signal peptide. The interval 28–327 (DIRCLTGKDG…DEGRKTLSAP (300 aa)) is nitrite reductase domain. 2 Plastocyanin-like domains span residues 72–169 (VPGP…IVEP) and 217–307 (GETW…VEEG). Cu cation is bound by residues His-102 and His-145. The hydroxylamine oxidoreductase domain stretch occupies residues 328 to 827 (GQDRQPPTLE…ISWWWGTAQG (500 aa)). Heme is bound by residues Cys-406, Cys-409, His-410, His-426, Cys-463, Cys-466, His-467, His-471, Cys-483, Cys-486, His-487, His-505, His-537, Cys-543, Cys-546, His-547, His-550, Cys-563, Cys-566, His-567, Cys-614, Cys-617, His-618, Cys-686, Cys-689, His-690, and His-813.

The protein in the N-terminal section; belongs to the multicopper oxidase family. Cu cation is required as a cofactor. Heme serves as cofactor.

It is found in the encapsulin nanocompartment. The catalysed reaction is hydroxylamine + 4 Fe(III)-[cytochrome c] + H2O = 4 Fe(II)-[cytochrome c] + nitrite + 5 H(+). It catalyses the reaction nitric oxide + Fe(III)-[cytochrome c] + H2O = Fe(II)-[cytochrome c] + nitrite + 2 H(+). Its function is as follows. A nitrite reductase-hydroxylamine oxidoreductase protein that probably functions in the type 1 encapsulin nanocompartment. Probably involved in reductive catalysis. Targeted to the encapsulin nanocompartment by association with the diheme domain of the encapsulin shell protein (AC Q1Q6L7). Catalyzes the reduction of nitrite to nitric oxide (NO). Catalyzes the oxidation of hydroxylamine to nitrite. The chain is Probable nitrite reductase-hydroxylamine oxidoreductase fusion protein from Kuenenia stuttgartiensis.